We begin with the raw amino-acid sequence, 134 residues long: ATP synthase epsilon chain (134 aa).

This sequence belongs to the ATPase epsilon chain family. F-type ATPases have 2 components, CF(1) - the catalytic core - and CF(0) - the membrane proton channel. CF(1) has five subunits: alpha(3), beta(3), gamma(1), delta(1), epsilon(1). CF(0) has three main subunits: a, b and c.

It localises to the cell membrane. In terms of biological role, produces ATP from ADP in the presence of a proton gradient across the membrane. This chain is ATP synthase epsilon chain (atpC), found in Priestia megaterium (strain ATCC 12872 / QMB1551) (Bacillus megaterium).